A 500-amino-acid polypeptide reads, in one-letter code: Flt3-interacting zinc finger protein 1 (500 aa).

Position 1 is an N-acetylmethionine (Met1). The disordered stretch occupies residues 1–24; that stretch reads MEDSSLPVVPAPIAAPGPAPSATA. Over residues 9 to 19 the composition is skewed to pro residues; sequence VPAPIAAPGPA. C2H2-type zinc fingers lie at residues 29-51, 57-79, 85-107, 113-136, 204-226, and 232-254; these read FHCSECGKSFRYRSDLRRHFARH, HACPRCGKGFKHSFNLANHLRSH, YRCSACPKGFRDSTGLLHHQVVH, YCCLVCELRFSSRSSLGRHLKRQH, FACGACARRFDHGRELAAHWAAH, and FKCPRCERDFNAPALLERHKLTH. 2 disordered regions span residues 255–284 and 306–328; these read DLQGSNAPPTQVWASGGGPEVAGEGDASEV and KLEALLPGDEGSGNDQAPAAAAE. Positions 256–267 are enriched in polar residues; it reads LQGSNAPPTQVW. 5 consecutive C2H2-type zinc fingers follow at residues 336–357, 363–386, 418–440, 446–468, and 474–496; these read YQCDCGTFFASAPALASHLEAH, YGCGHCGALYAALAALEEHRRASH, FGCSECEKLFRSPRDLERHVLVH, FPCLECGKFFRHECYLKRHRLLH, and FPCHICGKGFITLSNLSRHLKLH. Residues 383–415 form a disordered region; the sequence is RASHGEGSGEAAPDGEGNQAAGGPGPGSSSRSK.

Interacts with FLT3 cytoplasmic catalytic domain, following receptor stimulation, in a kinase-independent manner. Does not interact with other structurally related receptor tyrosine kinases, including KIT, CSF1R and PDGFR. Interacts with NRL. Widely expressed. In the retina, highest expression in the ganglion cell layer.

It localises to the cytoplasm. The protein resides in the nucleus. In terms of biological role, may be a transcriptional repressor of NRL function in photoreceptors. Does not repress CRX-mediated transactivation. The polypeptide is Flt3-interacting zinc finger protein 1 (Fiz1) (Mus musculus (Mouse)).